The primary structure comprises 375 residues: Succinyl-diaminopimelate desuccinylase (375 aa).

His-66 is a Zn(2+) binding site. The active site involves Asp-68. A Zn(2+)-binding site is contributed by Asp-99. Glu-133 acts as the Proton acceptor in catalysis. 3 residues coordinate Zn(2+): Glu-134, Glu-162, and His-348.

The protein belongs to the peptidase M20A family. DapE subfamily. Homodimer. Requires Zn(2+) as cofactor. It depends on Co(2+) as a cofactor.

The catalysed reaction is N-succinyl-(2S,6S)-2,6-diaminopimelate + H2O = (2S,6S)-2,6-diaminopimelate + succinate. It functions in the pathway amino-acid biosynthesis; L-lysine biosynthesis via DAP pathway; LL-2,6-diaminopimelate from (S)-tetrahydrodipicolinate (succinylase route): step 3/3. In terms of biological role, catalyzes the hydrolysis of N-succinyl-L,L-diaminopimelic acid (SDAP), forming succinate and LL-2,6-diaminopimelate (DAP), an intermediate involved in the bacterial biosynthesis of lysine and meso-diaminopimelic acid, an essential component of bacterial cell walls. This chain is Succinyl-diaminopimelate desuccinylase, found in Escherichia coli O6:K15:H31 (strain 536 / UPEC).